A 92-amino-acid polypeptide reads, in one-letter code: Small ribosomal subunit protein uS19 (92 aa).

It belongs to the universal ribosomal protein uS19 family.

Protein S19 forms a complex with S13 that binds strongly to the 16S ribosomal RNA. This chain is Small ribosomal subunit protein uS19, found in Rhizobium rhizogenes (strain K84 / ATCC BAA-868) (Agrobacterium radiobacter).